Reading from the N-terminus, the 289-residue chain is Oxaloacetate decarboxylase (289 aa).

Position 50 (Ser-50) interacts with substrate. Mg(2+) is bound at residue Asp-88. 2 residues coordinate substrate: Arg-159 and His-235.

Belongs to the isocitrate lyase/PEP mutase superfamily. Oxaloacetate decarboxylase family. Homotetramer; dimer of dimers. It depends on Mg(2+) as a cofactor.

The enzyme catalyses oxaloacetate + H(+) = pyruvate + CO2. Catalyzes the decarboxylation of oxaloacetate into pyruvate. Seems to play a role in maintaining cellular concentrations of bicarbonate and pyruvate. The chain is Oxaloacetate decarboxylase from Pseudomonas putida (strain ATCC 47054 / DSM 6125 / CFBP 8728 / NCIMB 11950 / KT2440).